The chain runs to 677 residues: Methionine--tRNA ligase (677 aa).

A 'HIGH' region motif is present at residues 15–25 (PYANGSIHLGH). Residues C146, C149, C159, and C162 each contribute to the Zn(2+) site. A 'KMSKS' region motif is present at residues 333–337 (KMSKS). Position 336 (K336) interacts with ATP. Positions 575–677 (DFAKVDLRVA…DGAKPGQQVK (103 aa)) constitute a tRNA-binding domain.

This sequence belongs to the class-I aminoacyl-tRNA synthetase family. MetG type 1 subfamily. In terms of assembly, homodimer. The cofactor is Zn(2+).

Its subcellular location is the cytoplasm. The enzyme catalyses tRNA(Met) + L-methionine + ATP = L-methionyl-tRNA(Met) + AMP + diphosphate. Functionally, is required not only for elongation of protein synthesis but also for the initiation of all mRNA translation through initiator tRNA(fMet) aminoacylation. The polypeptide is Methionine--tRNA ligase (Salmonella schwarzengrund (strain CVM19633)).